The chain runs to 187 residues: dCTP deaminase, dUMP-forming (187 aa).

Residues 101 to 106 and Asp-119 each bind dCTP; that span reads KSSLGR. Glu-129 (proton donor/acceptor) is an active-site residue. DCTP is bound by residues Gln-148, Tyr-162, and Gln-174.

The protein belongs to the dCTP deaminase family. Homotrimer.

It carries out the reaction dCTP + 2 H2O = dUMP + NH4(+) + diphosphate. The protein operates within pyrimidine metabolism; dUMP biosynthesis; dUMP from dCTP: step 1/1. In terms of biological role, bifunctional enzyme that catalyzes both the deamination of dCTP to dUTP and the hydrolysis of dUTP to dUMP without releasing the toxic dUTP intermediate. This chain is dCTP deaminase, dUMP-forming, found in Corynebacterium kroppenstedtii (strain DSM 44385 / JCM 11950 / CIP 105744 / CCUG 35717).